The primary structure comprises 147 residues: MCSPAGPVSVDHSARLILLAWRQTEQGAVVVAFKVRIHCRHEPILRPLAAVHLGQNHGPHQHLAPCFVLALLLLFPCPHPLNFGIDSRSLFFELGQPIRRLVAPLNHLDTPLLMCCLVGYHGGTAAAIPTLLCRGGRTYRFLFEKLA.

This is an uncharacterized protein from Escherichia coli.